We begin with the raw amino-acid sequence, 169 residues long: Protein ORFb in retron Ec67 (169 aa).

The polypeptide is Protein ORFb in retron Ec67 (Escherichia coli).